The chain runs to 365 residues: Glycosyltransferase 8 domain-containing protein 1 (365 aa).

Over 1 to 4 (MTVR) the chain is Cytoplasmic. A helical; Signal-anchor for type II membrane protein membrane pass occupies residues 5 to 22 (RVNVVILVLLVVAFLIVL). The Lumenal segment spans residues 23-365 (HRNLLNLNDF…HPIRKHVEEK (343 aa)). 4 N-linked (GlcNAc...) asparagine glycosylation sites follow: asparagine 102, asparagine 181, asparagine 245, and asparagine 253.

Belongs to the glycosyltransferase 8 family.

The protein resides in the membrane. In Danio rerio (Zebrafish), this protein is Glycosyltransferase 8 domain-containing protein 1 (glt8d1).